A 579-amino-acid polypeptide reads, in one-letter code: Arginine--tRNA ligase (579 aa).

Positions 127–137 match the 'HIGH' region motif; sequence ANPTGPLHVGH.

The protein belongs to the class-I aminoacyl-tRNA synthetase family. Monomer.

Its subcellular location is the cytoplasm. The enzyme catalyses tRNA(Arg) + L-arginine + ATP = L-arginyl-tRNA(Arg) + AMP + diphosphate. This Acidithiobacillus ferrooxidans (strain ATCC 23270 / DSM 14882 / CIP 104768 / NCIMB 8455) (Ferrobacillus ferrooxidans (strain ATCC 23270)) protein is Arginine--tRNA ligase.